A 520-amino-acid polypeptide reads, in one-letter code: GMP synthase [glutamine-hydrolyzing] (520 aa).

In terms of domain architecture, Glutamine amidotransferase type-1 spans 12–205 (KIIVLDYGSQ…AVNICGARGD (194 aa)). The Nucleophile role is filled by Cys-89. Residues His-179 and Glu-181 contribute to the active site. One can recognise a GMPS ATP-PPase domain in the interval 206 to 395 (WSMDNFIDME…LGMPDEVVWR (190 aa)). 233-239 (SGGVDSS) lines the ATP pocket.

In terms of assembly, homodimer.

The catalysed reaction is XMP + L-glutamine + ATP + H2O = GMP + L-glutamate + AMP + diphosphate + 2 H(+). The protein operates within purine metabolism; GMP biosynthesis; GMP from XMP (L-Gln route): step 1/1. Catalyzes the synthesis of GMP from XMP. The protein is GMP synthase [glutamine-hydrolyzing] of Streptococcus agalactiae serotype III (strain NEM316).